The chain runs to 365 residues: DNA replication and repair protein RecF (365 aa).

30–37 (GDNGEGKT) is an ATP binding site.

The protein belongs to the RecF family.

The protein localises to the cytoplasm. In terms of biological role, the RecF protein is involved in DNA metabolism; it is required for DNA replication and normal SOS inducibility. RecF binds preferentially to single-stranded, linear DNA. It also seems to bind ATP. This chain is DNA replication and repair protein RecF, found in Leptospira interrogans serogroup Icterohaemorrhagiae serovar copenhageni (strain Fiocruz L1-130).